The chain runs to 396 residues: Elongation factor Tu (396 aa).

The 197-residue stretch at 10-206 (KPHVNVGTIG…ALDSYIPEPT (197 aa)) folds into the tr-type G domain. Residues 19 to 26 (GHVDHGKT) form a G1 region. GTP is bound at residue 19–26 (GHVDHGKT). Thr-26 serves as a coordination point for Mg(2+). Residues 60 to 64 (GITIS) are G2. The segment at 81 to 84 (DCPG) is G3. GTP-binding positions include 81 to 85 (DCPGH) and 136 to 139 (NKAD). Residues 136–139 (NKAD) form a G4 region. The segment at 174-176 (SAL) is G5.

This sequence belongs to the TRAFAC class translation factor GTPase superfamily. Classic translation factor GTPase family. EF-Tu/EF-1A subfamily. As to quaternary structure, monomer.

The protein resides in the cytoplasm. It carries out the reaction GTP + H2O = GDP + phosphate + H(+). Functionally, GTP hydrolase that promotes the GTP-dependent binding of aminoacyl-tRNA to the A-site of ribosomes during protein biosynthesis. The sequence is that of Elongation factor Tu from Hydrogenovibrio crunogenus (strain DSM 25203 / XCL-2) (Thiomicrospira crunogena).